Reading from the N-terminus, the 958-residue chain is MutS protein homolog 4 (958 aa).

Disordered regions lie at residues 51-110 (QEAA…SFGN) and 124-161 (PVGT…WTPQ). The span at 91–107 (SSSSSSSPAPASAPGSS) shows a compositional bias: low complexity. 2 stretches are compositionally biased toward polar residues: residues 124–138 (PVGT…TTYP) and 146–161 (SAGN…WTPQ). 702–709 (GPNMSGKS) is a binding site for ATP.

It belongs to the DNA mismatch repair MutS family. As to quaternary structure, heterooligomer of MSH4 and MSH5. Predominantly expressed in testis.

The protein localises to the chromosome. Its function is as follows. Involved in meiotic recombination. Required for reciprocal recombination and proper segregation of homologous chromosomes at meiosis. The protein is MutS protein homolog 4 (Msh4) of Mus musculus (Mouse).